Here is a 119-residue protein sequence, read N- to C-terminus: Acidic phospholipase A2 DE-II (119 aa).

Intrachain disulfides connect Cys11–Cys72, Cys26–Cys118, Cys28–Cys44, Cys43–Cys99, Cys50–Cys92, Cys60–Cys85, and Cys79–Cys90. Ca(2+) contacts are provided by Tyr27, Gly29, and Gly31. His47 is an active-site residue. Residue Asp48 coordinates Ca(2+). Asp93 is a catalytic residue.

Belongs to the phospholipase A2 family. Group I subfamily. D49 sub-subfamily. The cofactor is Ca(2+). Expressed by the venom gland.

Its subcellular location is the secreted. The catalysed reaction is a 1,2-diacyl-sn-glycero-3-phosphocholine + H2O = a 1-acyl-sn-glycero-3-phosphocholine + a fatty acid + H(+). Its function is as follows. PLA2 catalyzes the calcium-dependent hydrolysis of the 2-acyl groups in 3-sn-phosphoglycerides. The protein is Acidic phospholipase A2 DE-II of Naja melanoleuca (Forest cobra).